A 191-amino-acid polypeptide reads, in one-letter code: Cell division protein SepF (191 aa).

A compositionally biased stretch (low complexity) spans 151-164 (SSSPEEASPSSVST). The interval 151–191 (SSSPEEASPSSVSTEKTPQYSLGKNTTPEPAWGNSKLSAYS) is disordered. Polar residues predominate over residues 165-178 (EKTPQYSLGKNTTP).

It belongs to the SepF family. Homodimer. Interacts with FtsZ.

The protein resides in the cytoplasm. Its function is as follows. Cell division protein that is part of the divisome complex and is recruited early to the Z-ring. Probably stimulates Z-ring formation, perhaps through the cross-linking of FtsZ protofilaments. Its function overlaps with FtsA. This is Cell division protein SepF from Prochlorococcus marinus (strain MIT 9301).